The primary structure comprises 884 residues: MGGTDKFRYPSVWLCGLLCLLQVVPSINVDVSGCQPGFSSANYTFSVNRRELERGRKLGKVNLVDCTTRKHGLYDVGDSRFRVLPDGTVLVKRHVKLHSKDTRFTISTWDARGIKHSTNISVVNKRHRSGEEARSRSSELPVLTFPEKHTGLKRKKRDWVIPPIKVSENERGPFPKRLVQIKSNKEKLSKVFYSITGQGADTPPEGIFRIEKETGWMQVTRPLDREEYEKYVLLSHAVSENGASVEEPMEITVTVIDQNDNRPKFTQPVFRGSVREGVQPGTKVMSVSATDDDDSIDSLNGVIAYSILKQDPEEPIPNLFTINRETGVISLIGTGLDREKFPEYTLTVQAADLDGAGLTAEGKAVIEITDANDNAPIFDPKTYTALVPENEVGFEVQRLSVTDLDMPGTAAWQAVYKIRVNEGGFFNITTDPESNQGILTTAKGLDFEVRKQYVIQITVENAVPFSVPLPTSTATVTVTVEDVNEAPVFVPVVSRVDVSEDLTRGEKIVSLVAQDPDKQQIQKLSYFIGNDPARWLTINKDNGIVTGNGNLDRESEYVKNNTYTVIMLVTDDGVPVGTGTGTLILHVLDINDNGPVPSPRVFTMCDQNPEPQVLTITDADIPPNTYPYSVSLSHGSELTWKAELDSKGTSMRLSPTQQLKKGDYSIYVLLADAQANRQLTVVNATVCICEGKAIKCQEKLVAGFDLPIILVILGSILALLILSLLLLLFLKRKKVVKEPLLLPEDDTRDNIFYYGEEGGGEEDQDYDLSQLHRGLDARPDIMRNDVVPTLMSVPHYRPRPSNPDEIGNFIDENLDAADNDPTAPPYDSLLVFDYEGSGSEAASLSSLNSSNSNNEHDYNYLNDWGPRFRKLADMYGGDDDDDEE.

Residues 1–26 (MGGTDKFRYPSVWLCGLLCLLQVVPS) form the signal peptide. The propeptide occupies 27–157 (INVDVSGCQP…KHTGLKRKKR (131 aa)). 5 Cadherin domains span residues 158–265 (DWVI…RPKF), 266–378 (TQPV…APIF), 379–489 (DPKT…APVF), 490–595 (VPVV…DNGP), and 596–706 (VPSP…GFDL). Over 158–706 (DWVIPPIKVS…QEKLVAGFDL (549 aa)) the chain is Extracellular. N-linked (GlcNAc...) asparagine glycans are attached at residues N427, N560, and N683. A helical membrane pass occupies residues 707-730 (PIILVILGSILALLILSLLLLLFL). At 731-884 (KRKKVVKEPL…YGGDDDDDEE (154 aa)) the chain is on the cytoplasmic side.

As to expression, expressed in pituitary gland, lung and kidney.

The protein localises to the cell membrane. Functionally, cadherins are calcium-dependent cell adhesion proteins. They preferentially interact with themselves in a homophilic manner in connecting cells; cadherins may thus contribute to the sorting of heterogeneous cell types. The chain is Blastomere cadherin from Xenopus laevis (African clawed frog).